A 315-amino-acid polypeptide reads, in one-letter code: Eukaryotic translation initiation factor 2 subunit 1 (315 aa).

In terms of domain architecture, S1 motif spans 17–88 (EDVVMVNVRS…EKGYIDLSKR (72 aa)). 2 positions are modified to phosphoserine: Ser-49 and Ser-52. Residues 292–315 (RLERENAEVDGDDDAEEMEAKTED) form a disordered region. Over residues 299–308 (EVDGDDDAEE) the composition is skewed to acidic residues.

Belongs to the eIF-2-alpha family. As to quaternary structure, eukaryotic translation initiation factor 2 eIF2 is a heterotrimeric complex composed of an alpha (EIF2S1), a beta (EIF2S2) and a gamma (EIF2S3) chain. Post-translationally, phosphorylation at Ser-49 and Ser-52 stabilizes the eIF-2/GDP/eIF2B complex and prevents GDP/GTP exchange reaction, thus impairing the recycling of eIF-2 between successive rounds of initiation and leading to global inhibition of translation, while concomitantly initiating the preferential translation of integrated stress response (ISR)-specific mRNAs.

The protein localises to the cytoplasm. Its subcellular location is the stress granule. It localises to the cytosol. With respect to regulation, activity is regulated by phosphorylation at Ser-49 and Ser-52, which stabilizes the eIF2/GDP/eIF2B complex and prevents the eIF2B-mediated exchange of GDP for GTP, thereby preventing the formation of the 43S pre-initiation complex (43S PIC). This results in the global attenuation of 5' cap-dependent protein synthesis and concomitant translation of ISR-specific mRNAs that contain a short upstream open reading frame (uORF) in their 5' UTR. Member of the eIF2 complex that functions in the early steps of protein synthesis by forming a ternary complex with GTP and initiator tRNA. This complex binds to a 40S ribosomal subunit, followed by mRNA binding to form a 43S pre-initiation complex. Junction of the 60S ribosomal subunit to form the 80S initiation complex is preceded by hydrolysis of the GTP bound to eIF2 and release of an eIF2-GDP binary complex. In order for eIF2 to recycle and catalyze another round of initiation, the GDP bound to eIF2 must exchange with GTP by way of a reaction catalyzed by eIF2B. EIF2S1/eIF2-alpha is a key component of the integrated stress response (ISR), required for adaptation to various stress: phosphorylation by metabolic-stress sensing protein kinases (EIF2AK1/HRI, EIF2AK2/PKR, EIF2AK3/PERK and EIF2AK4/GCN2) in response to stress converts EIF2S1/eIF2-alpha in a global protein synthesis inhibitor, leading to a attenuation of cap-dependent translation, while concomitantly initiating the preferential translation of ISR-specific mRNAs, such as the transcriptional activators ATF4 and QRICH1. The chain is Eukaryotic translation initiation factor 2 subunit 1 (EIF2S1) from Gallus gallus (Chicken).